Here is a 635-residue protein sequence, read N- to C-terminus: Chaperone protein DnaK (635 aa).

Position 198 is a phosphothreonine; by autocatalysis (Thr-198). A disordered region spans residues 597–635 (LYEQDQANNERHDTPETEKAEGDNVVDAEFQEIDDQDKK). The segment covering 604 to 618 (NNERHDTPETEKAEG) has biased composition (basic and acidic residues). A compositionally biased stretch (acidic residues) spans 620-635 (NVVDAEFQEIDDQDKK).

Belongs to the heat shock protein 70 family.

Functionally, acts as a chaperone. This Zymomonas mobilis subsp. mobilis (strain ATCC 31821 / ZM4 / CP4) protein is Chaperone protein DnaK.